A 405-amino-acid polypeptide reads, in one-letter code: Probable tRNA sulfurtransferase (405 aa).

A THUMP domain is found at 60 to 165 (DAVINRLKKV…SNGIFLTSEV (106 aa)). ATP-binding positions include 183 to 184 (ML), 208 to 209 (HF), arginine 265, glycine 287, and glutamine 296.

Belongs to the ThiI family.

It is found in the cytoplasm. The catalysed reaction is [ThiI sulfur-carrier protein]-S-sulfanyl-L-cysteine + a uridine in tRNA + 2 reduced [2Fe-2S]-[ferredoxin] + ATP + H(+) = [ThiI sulfur-carrier protein]-L-cysteine + a 4-thiouridine in tRNA + 2 oxidized [2Fe-2S]-[ferredoxin] + AMP + diphosphate. It carries out the reaction [ThiS sulfur-carrier protein]-C-terminal Gly-Gly-AMP + S-sulfanyl-L-cysteinyl-[cysteine desulfurase] + AH2 = [ThiS sulfur-carrier protein]-C-terminal-Gly-aminoethanethioate + L-cysteinyl-[cysteine desulfurase] + A + AMP + 2 H(+). The protein operates within cofactor biosynthesis; thiamine diphosphate biosynthesis. Functionally, catalyzes the ATP-dependent transfer of a sulfur to tRNA to produce 4-thiouridine in position 8 of tRNAs, which functions as a near-UV photosensor. Also catalyzes the transfer of sulfur to the sulfur carrier protein ThiS, forming ThiS-thiocarboxylate. This is a step in the synthesis of thiazole, in the thiamine biosynthesis pathway. The sulfur is donated as persulfide by IscS. The polypeptide is Probable tRNA sulfurtransferase (Pediococcus pentosaceus (strain ATCC 25745 / CCUG 21536 / LMG 10740 / 183-1w)).